Reading from the N-terminus, the 384-residue chain is Substance-K receptor (384 aa).

The Extracellular portion of the chain corresponds to 1 to 32; it reads MGAHAIVTDANISSSLENNTTGITAFSMPGWQ. Residues N11, N18, and N19 are each glycosylated (N-linked (GlcNAc...) asparagine). The chain crosses the membrane as a helical span at residues 33 to 56; sequence LALWATAYLVLVLVAVTGNATVIW. Residues 57-69 are Cytoplasmic-facing; the sequence is IILAHQRMRTVTN. A helical transmembrane segment spans residues 70–90; it reads YFIVNLALADLCMAAFNAAFN. Residues 91–107 are Extracellular-facing; the sequence is FVYASHNIWYFGRAFCH. C106 and C181 form a disulfide bridge. A helical transmembrane segment spans residues 108 to 129; that stretch reads FQNLFPITAMFVSIYSMTAIAA. Topologically, residues 130-149 are cytoplasmic; it reads DRYVAIVHPFQPRLSAPGTR. A helical membrane pass occupies residues 150–170; it reads AVIAGIWLLALALAFPQCFYS. The Extracellular segment spans residues 171–196; it reads TITMDQGATKCVVVWPEDNGSKMLLL. A helical transmembrane segment spans residues 197–218; the sequence is YHLVVIALIYVLPLLVMLLAYS. Topologically, residues 219-251 are cytoplasmic; the sequence is VIGLTLWRREVPRHQVHGASLRHLRAKKKFVKT. The helical transmembrane segment at 252–272 threads the bilayer; the sequence is MVLVVVTFAICWLPYHFYFIL. At 273 to 290 the chain is on the extracellular side; it reads GSFQEDIYYHKFIQQVYL. A helical membrane pass occupies residues 291–310; sequence ALFWLAMSSTMYNPIIYCCL. The Cytoplasmic segment spans residues 311-384; it reads NHRFRSGFRL…GPQDGLPDEP (74 aa). C324 is lipidated: S-palmitoyl cysteine.

Belongs to the G-protein coupled receptor 1 family.

It is found in the cell membrane. In terms of biological role, this is a receptor for the tachykinin neuropeptide substance K (neurokinin A). It is associated with G proteins that activate a phosphatidylinositol-calcium second messenger system. This Canis lupus familiaris (Dog) protein is Substance-K receptor (TACR2).